The primary structure comprises 712 residues: MIFHCEVDKIVDQLQQLMQVYDLAALRDYWSYLERRLFSRLEDIYRPTIHKLKTSLFRFYLVYTIQTNRNDKAQEFFAKQATELQNQAEWKDWFVLPFLPSPDTNPTFATYFSRQWADTFIVSLHNFLSVLFQCMPVPVILNFDAECRRTNQVQEENEVLRQKLFALQAEIHRLKKEEQQPEEEEALVQHKLPPYVSNMDRLGDSELAMVCSQRNASLSQSPRVGFLSSLLPQSKKSPSRLSPAQGPPQAQSSAKKESFGGQGTKGKDPTSGAKDGKGLLSGLATGESGWSQHRQRRLQDHGKERKELFSTTTSQCAEKKPEASGPEAEPCPELHTEPVEPLTRTSLAGPEGGGVRPEQPFIVLGQEEYGEHHSSIMHCRVDCSGRRVASLDVDGVIKVWSFNPIMQTKASSISKSPLLSLEWATKRDRLLLLGSGVGTVRLYDTEAKKNLCEININDDMPRILSLACSPNGASFVCSAAAPSLTSQVDFSAPDIGSKGMNQVPGRLLLWDTKTMKQQLQFSLDPEPIAINCTAFNHNGNLLVTGAADGVIRLFDMQQHECAMSWRAHYGEVYSVEFSYDENTVYSIGEDGKFIQWNIHKSGLKVSEYSLPSDATGPFVLSGYSGYKQVQVPRGRLFAFDSEGNYMLTCSATGGVIYKLGGDEKVLESCLSLGGHRAPVVTVDWSTAMDCGTCLTASMDGKIKLTTLLAHKA.

Residues R148–Q180 are a coiled coil. S221 carries the phosphoserine modification. The span at L230 to P243 shows a compositional bias: low complexity. The disordered stretch occupies residues L230–T336. Phosphoserine occurs at positions 253 and 258. A compositionally biased stretch (basic and acidic residues) spans R297–L308. WD repeat units follow at residues E371–A410, I413–E453, A480–Q520, P525–S564, A567–S606, V629–E667, and G674–A712.

The protein belongs to the WD repeat WDR91 family. Interacts with WDR81; involved in early to late endosome cargo transport. Interacts with BECN1; negatively regulates the PI3 kinase/PI3K activity associated with endosomal membranes.

The protein resides in the early endosome membrane. Its subcellular location is the late endosome membrane. Functionally, functions as a negative regulator of the PI3 kinase/PI3K activity associated with endosomal membranes via BECN1, a core subunit of the PI3K complex. By modifying the phosphatidylinositol 3-phosphate/PtdInsP3 content of endosomal membranes may regulate endosome fusion, recycling, sorting and early to late endosome transport. It is for instance, required for the delivery of cargos like BST2/tetherin from early to late endosome and thereby participates indirectly to their degradation by the lysosome. May play a role in meiosis. The sequence is that of WD repeat-containing protein 91 from Pongo abelii (Sumatran orangutan).